The primary structure comprises 93 residues: MDIRTLALFSILLGSLCLSEGKPVSLVYRCPCRYFESNVPKSNIKHLKILSTSNCSLQIVARLKHNGKQICLDPKTKWIQEYLEKALNKKVKT.

The signal sequence occupies residues 1–21 (MDIRTLALFSILLGSLCLSEG). Residues 22-23 (KP) carry the Receptor activation motif motif. The receptor and heparin binding stretch occupies residues 29-33 (RCPCR). Intrachain disulfides connect Cys30–Cys55 and Cys32–Cys71. Residues 41–51 (KSNIKHLKILS), Arg62, Gln69, and Lys85 contribute to the heparin site. 2 receptor binding regions span residues 48–50 (KIL) and 60–64 (VARLK).

It belongs to the intercrine alpha (chemokine CxC) family. In terms of assembly, monomer or homodimer; in equilibrium. Dimer formation is induced by non acidic pH and the presence of multivalent anions, and by binding to cxcr4 or heparin.

The protein resides in the secreted. Functionally, chemoattractant. Activates the C-X-C chemokine receptor cxcr4 to induce a rapid and transient rise in the level of intracellular calcium ions, and chemotaxis. Signaling with cxcr4 mediates the directional movement of mesodermal cells during gastrulation. Binds to the allosteric site (site 2) of integrins and activates them in a cxcr4-independent manner. In Xenopus tropicalis (Western clawed frog), this protein is Stromal cell-derived factor 1.